The primary structure comprises 169 residues: Phosphopantetheine adenylyltransferase (169 aa).

Thr-13 contributes to the substrate binding site. Residues 13 to 14 (TF) and His-21 each bind ATP. 3 residues coordinate substrate: Lys-45, Leu-82, and Arg-96. ATP contacts are provided by residues 97-99 (GLR), Glu-107, and 132-138 (HQFISSR).

This sequence belongs to the bacterial CoaD family. In terms of assembly, homohexamer. Mg(2+) serves as cofactor.

The protein localises to the cytoplasm. The catalysed reaction is (R)-4'-phosphopantetheine + ATP + H(+) = 3'-dephospho-CoA + diphosphate. It participates in cofactor biosynthesis; coenzyme A biosynthesis; CoA from (R)-pantothenate: step 4/5. Reversibly transfers an adenylyl group from ATP to 4'-phosphopantetheine, yielding dephospho-CoA (dPCoA) and pyrophosphate. This is Phosphopantetheine adenylyltransferase from Acidiphilium cryptum (strain JF-5).